The chain runs to 494 residues: 2,3-bisphosphoglycerate-independent phosphoglycerate mutase (494 aa).

Positions 12 and 62 each coordinate Mn(2+). Ser-62 acts as the Phosphoserine intermediate in catalysis. Residues His-121, 150 to 151, Arg-181, Arg-187, 252 to 255, and Lys-317 each bind substrate; these read RD and RSDR. Asp-384, His-388, Asp-425, His-426, and His-443 together coordinate Mn(2+).

It belongs to the BPG-independent phosphoglycerate mutase family. In terms of assembly, monomer. Mn(2+) serves as cofactor.

The enzyme catalyses (2R)-2-phosphoglycerate = (2R)-3-phosphoglycerate. It functions in the pathway carbohydrate degradation; glycolysis; pyruvate from D-glyceraldehyde 3-phosphate: step 3/5. In terms of biological role, catalyzes the interconversion of 2-phosphoglycerate and 3-phosphoglycerate. The polypeptide is 2,3-bisphosphoglycerate-independent phosphoglycerate mutase (Anaplasma marginale (strain St. Maries)).